Consider the following 206-residue polypeptide: Large ribosomal subunit protein uL4 (206 aa).

Positions 46 to 77 (GTRAQKDREQVKHSTKKPFKQKGTGNARAGMT) are disordered.

The protein belongs to the universal ribosomal protein uL4 family. Part of the 50S ribosomal subunit.

One of the primary rRNA binding proteins, this protein initially binds near the 5'-end of the 23S rRNA. It is important during the early stages of 50S assembly. It makes multiple contacts with different domains of the 23S rRNA in the assembled 50S subunit and ribosome. In terms of biological role, forms part of the polypeptide exit tunnel. This is Large ribosomal subunit protein uL4 from Acidovorax ebreus (strain TPSY) (Diaphorobacter sp. (strain TPSY)).